Consider the following 156-residue polypeptide: Endoribonuclease YbeY (156 aa).

Histidine 105, histidine 109, and aspartate 115 together coordinate Zn(2+).

Belongs to the endoribonuclease YbeY family. It depends on Zn(2+) as a cofactor.

Its subcellular location is the cytoplasm. Single strand-specific metallo-endoribonuclease involved in late-stage 70S ribosome quality control and in maturation of the 3' terminus of the 16S rRNA. This chain is Endoribonuclease YbeY, found in Chlorobium chlorochromatii (strain CaD3).